The chain runs to 54 residues: Low temperature-induced protein lt101.2 (54 aa).

A run of 2 helical transmembrane segments spans residues 2–22 (ASAT…GVFL) and 34–54 (LLLT…VLVA).

The protein belongs to the UPF0057 (PMP3) family.

It is found in the membrane. In Hordeum vulgare (Barley), this protein is Low temperature-induced protein lt101.2 (LT101.2).